The chain runs to 331 residues: Reticulocalbin-1 (331 aa).

A signal peptide spans 1-29 (MARGGRGRRLGLALGLLLALVLAPRVLRA). N-linked (GlcNAc...) asparagine glycosylation occurs at N53. Position 55 is a phosphoserine (S55). The residue at position 76 (T76) is a Phosphothreonine. 6 EF-hand domains span residues 79 to 114 (ESKE…VQKR), 115 to 150 (YIFD…YYLG), 166 to 201 (KMLP…EEFE), 203 to 238 (MKEI…HEEN), 244 to 279 (WVLS…QDYD), and 280 to 315 (HAQA…FVGS). S80 carries the post-translational modification Phosphoserine; by FAM20C. Ca(2+)-binding residues include D92, D94, D96, E103, D128, D130, D132, K134, E139, D179, N181, D183, T185, E190, D216, N218, D220, E227, D257, N259, D261, K263, E268, D293, N295, D297, K299, and E304. Positions 328-331 (HDEL) match the Prevents secretion from ER motif.

The protein belongs to the CREC family. O-glycosylated. O-mannosylated by POMT1 and POMT2 and elongated by POMGNT1.

It localises to the endoplasmic reticulum lumen. Its function is as follows. May regulate calcium-dependent activities in the endoplasmic reticulum lumen or post-ER compartment. The chain is Reticulocalbin-1 (RCN1) from Homo sapiens (Human).